Consider the following 896-residue polypeptide: MAAAGPRRSVRGAVCLHLLLTLVIFSRAGEACKKVILNVPSKLEADKIIGRVNLEECFRSADLIRSSDPDFRVLNDGSVYTARAVALSDKKRSFTIWLSDKRKQTQKEVTVLLEHQKKVSKTRHTRETVLRRAKRRWAPIPCSMQENSLGPFPLFLQQVESDAAQNYTVFYSISGRGVDKEPLNLFYIERDTGNLFCTRPVDREEYDVFDLIAYASTADGYSADLPLPLPIRVEDENDNHPVFTEAIYNFEVLESSRPGTTVGVVCATDRDEPDTMHTRLKYSILQQTPRSPGLFSVHPSTGVITTVSHYLDREVVDKYSLIMKVQDMDGQFFGLIGTSTCIITVTDSNDNAPTFRQNAYEAFVEENAFNVEILRIPIEDKDLINTANWRVNFTILKGNENGHFKISTDKETNEGVLSVVKPLNYEENRQVNLEIGVNNEAPFARDIPRVTALNRALVTVHVRDLDEGPECTPAAQYVRIKENLAVGSKINGYKAYDPENRNGNGLRYKKLHDPKGWITIDEISGSIITSKILDREVETPKNELYNITVLAIDKDDRSCTGTLAVNIEDVNDNPPEILQEYVVICKPKMGYTDILAVDPDEPVHGAPFYFSLPNTSPEISRLWSLTKVNDTAARLSYQKNAGFQEYTIPITVKDRAGQAATKLLRVNLCECTHPTQCRATSRSTGVILGKWAILAILLGIALLFSVLLTLVCGVFGATKGKRFPEDLAQQNLIISNTEAPGDDRVCSANGFMTQTTNNSSQGFCGTMGSGMKNGGQETIEMMKGGNQTLESCRGAGHHHTLDSCRGGHTEVDNCRYTYSEWHSFTQPRLGEKLHRCNQNEDRMPSQDYVLTYNYEGRGSPAGSVGCCSEKQEEDGLDFLNNLEPKFITLAEACTKR.

The signal sequence occupies residues 1–27; sequence MAAAGPRRSVRGAVCLHLLLTLVIFSR. The propeptide occupies 28 to 135; it reads AGEACKKVIL…RETVLRRAKR (108 aa). 5 consecutive Cadherin domains span residues 136 to 243, 244 to 355, 356 to 471, 472 to 579, and 580 to 690; these read RWAP…HPVF, TEAI…APTF, RQNA…GPEC, TPAA…EILQ, and EYVV…ILGK. Residues 136–690 lie on the Extracellular side of the membrane; that stretch reads RWAPIPCSMQ…SRSTGVILGK (555 aa). The N-linked (GlcNAc...) asparagine glycan is linked to N166. 3 N-linked (GlcNAc...) asparagine glycosylation sites follow: N392, N546, and N629. Residues 691–711 form a helical membrane-spanning segment; it reads WAILAILLGIALLFSVLLTLV. Topologically, residues 712–896 are cytoplasmic; the sequence is CGVFGATKGK…ITLAEACTKR (185 aa).

May form homodimers. Interacts with DSG1; there is evidence to suggest that the interaction promotes cell-cell adhesion of keratinocytes. In terms of tissue distribution, expressed throughout the basal and spinous layer of the epidermis with weak expression in the granular layer (at protein level). Also expressed in the buccal mucosa, esophagus and cervix (at protein level).

It is found in the cell membrane. The protein resides in the cell junction. The protein localises to the desmosome. It localises to the cytoplasm. A component of desmosome cell-cell junctions which are required for positive regulation of cellular adhesion. Required for cell-cell adhesion in the epidermis, as a result required for the maintenance of the dermal cohesion and the dermal barrier function. Required for cell-cell adhesion of epithelial cell layers surrounding the telogen hair club, as a result plays an important role in telogen hair shaft anchorage. Essential for successful completion of embryo compaction and embryo development. The polypeptide is Desmocollin-3 (DSC3) (Homo sapiens (Human)).